Consider the following 523-residue polypeptide: REST corepressor 2 (523 aa).

The segment at 1 to 43 (MPSVMEKPSAGSGILSRSRAKTAPNGGQPHSEDDSSEEEHSHD) is disordered. Positions 30–43 (HSEDDSSEEEHSHD) are enriched in basic and acidic residues. Phosphoserine is present on residues Ser-31, Ser-35, Ser-36, and Ser-63. The ELM2 domain maps to 44–129 (SMIRVGTNYQ…KSLADLANFT (86 aa)). Lys-88 is covalently cross-linked (Glycyl lysine isopeptide (Lys-Gly) (interchain with G-Cter in SUMO2)). An SANT 1 domain is found at 130–181 (PFPDEWTVEDKVLFEQAFGFHGKCFQRIQQMLPDKVIPSLVKYYYSWKKTRS). Positions 185–244 (VMDRQARRLGGRKDKEDSDELEEGRGAVSEGEPDTGDPKREPLPSRPLNARPGPGKKEVQ) are disordered. Ser-202 is subject to Phosphoserine. The stretch at 283–314 (TLRGLDSQLISLKRQVQSMKQTNSSLRQALEG) forms a coiled coil. The region spanning 327 to 378 (KFNSRWTTDEQLLAVQAIRRYGKDFGAIAEVIGNKTLTQVKTFFVSYRRRFN) is the SANT 2 domain. Residues 387–523 (EAEQDGAPAA…APLEPPAPSL (137 aa)) are disordered. The span at 432–459 (SVPPAPPPPPPPTSLSQPPPLLRPPLPT) shows a compositional bias: pro residues. The span at 460-482 (APTLLRQPPPLQQGRFLQPRLAP) shows a compositional bias: low complexity. Arg-479 carries the asymmetric dimethylarginine modification. Pro residues predominate over residues 504–523 (GPQPPPTLVGAPLEPPAPSL).

Belongs to the CoREST family. In terms of tissue distribution, predominantly, but not exclusively, expressed in neural tissue. Strongly expressed in neural domains of the developing brain of the developing mouse CNS.

It is found in the nucleus. Its function is as follows. May act as a component of a corepressor complex that represses transcription. The polypeptide is REST corepressor 2 (Rcor2) (Mus musculus (Mouse)).